A 556-amino-acid chain; its full sequence is Formate--tetrahydrofolate ligase (556 aa).

65-72 (TPAGEGKS) contributes to the ATP binding site.

Belongs to the formate--tetrahydrofolate ligase family.

It carries out the reaction (6S)-5,6,7,8-tetrahydrofolate + formate + ATP = (6R)-10-formyltetrahydrofolate + ADP + phosphate. Its pathway is one-carbon metabolism; tetrahydrofolate interconversion. The chain is Formate--tetrahydrofolate ligase from Streptococcus pneumoniae (strain 70585).